Consider the following 178-residue polypeptide: Caveolin-1 (178 aa).

N-acetylserine is present on S2. The residue at position 2 (S2) is a Phosphoserine. Residues S2–V94 are required for homooligomerization. The Cytoplasmic segment spans residues S2–S104. K5 carries the post-translational modification N6-acetyllysine; alternate. A Glycyl lysine isopeptide (Lys-Gly) (interchain with G-Cter in ubiquitin); alternate cross-link involves residue K5. Y6 carries the phosphotyrosine modification. At S9 the chain carries Phosphoserine. A Phosphotyrosine; by ABL1 modification is found at Y14. Y25 bears the Phosphotyrosine mark. Glycyl lysine isopeptide (Lys-Gly) (interchain with G-Cter in ubiquitin) cross-links involve residues K26 and K30. S37 bears the Phosphoserine mark. Glycyl lysine isopeptide (Lys-Gly) (interchain with G-Cter in ubiquitin) cross-links involve residues K39, K47, and K57. The interaction with CAVIN3 stretch occupies residues D82–V94. An intramembrane region (helical) is located at residues A105–L125. Residues H126 to T178 are Cytoplasmic-facing. The interval V131–Q142 is interacts with SPRY1, SPRY2, SPRY3 and SPRY4. S-palmitoyl cysteine attachment occurs at residues C133, C143, and C156. Residues S149 to F160 are interacts with SPRY1, SPRY2, and SPRY4. The segment at F167–T178 is interacts with SPRY1, SPRY2, SPRY3 and SPRY4.

The protein belongs to the caveolin family. As to quaternary structure, homooligomer. Interacts with BMX, BTK, GLIPR2, NOSTRIN, SNAP25 and STX1A. Interacts with PACSIN2; this interaction induces membrane tubulation. Interacts (via the N-terminus) with DPP4; the interaction is direct. Interacts with SLC7A9. Interacts with CTNNB1, CDH1 and JUP. Interacts with TGFBR1. Interacts with CAVIN3 (via leucine-zipper domain) in a cholesterol-sensitive manner. Interacts with CAVIN1. Interacts with EHD2 in a cholesterol-dependent manner. Forms a ternary complex with UBXN6 and VCP; mediates CAV1 targeting to lysosomes for degradation. Interacts with ABCG1; this interaction regulates ABCG1-mediated cholesterol efflux. Interacts with NEU3; this interaction enhances NEU3 sialidase activity within caveola. Interacts (via C-terminus) with SPRY1, SPRY2 (via C-terminus), SPRY3, and SPRY4. Interacts with IGFBP5; this interaction allows trafficking of IGFBP5 from the plasma membrane to the nucleus. In terms of processing, phosphorylation of isoform Beta on serine residues is constitutive. Phosphorylated at Tyr-14 by ABL1 in response to oxidative stress. Ubiquitinated. Undergo monoubiquitination and multi- and/or polyubiquitination. Monoubiquitination of N-terminal lysines promotes integration in a ternary complex with UBXN6 and VCP which promotes oligomeric CAV1 targeting to lysosomes for degradation. Ubiquitinated by ZNRF1; leading to degradation and modulation of the TLR4-mediated immune response.

The protein resides in the golgi apparatus membrane. It localises to the cell membrane. It is found in the membrane. Its subcellular location is the caveola. The protein localises to the membrane raft. The protein resides in the golgi apparatus. It localises to the trans-Golgi network. Functionally, may act as a scaffolding protein within caveolar membranes. Forms a stable heterooligomeric complex with CAV2 that targets to lipid rafts and drives caveolae formation. Mediates the recruitment of CAVIN proteins (CAVIN1/2/3/4) to the caveolae. Interacts directly with G-protein alpha subunits and can functionally regulate their activity. Involved in the costimulatory signal essential for T-cell receptor (TCR)-mediated T-cell activation. Its binding to DPP4 induces T-cell proliferation and NF-kappa-B activation in a T-cell receptor/CD3-dependent manner. Recruits CTNNB1 to caveolar membranes and may regulate CTNNB1-mediated signaling through the Wnt pathway. Negatively regulates TGFB1-mediated activation of SMAD2/3 by mediating the internalization of TGFBR1 from membrane rafts leading to its subsequent degradation. Binds 20(S)-hydroxycholesterol (20(S)-OHC). The sequence is that of Caveolin-1 (CAV1) from Canis lupus familiaris (Dog).